The primary structure comprises 210 residues: Protein GET1 (210 aa).

Topologically, residues 1–4 are lumenal; sequence MPSL. A helical membrane pass occupies residues 5-24; it reads LIIVLIIHVVTYLINTIGAN. At 25–110 the chain is on the cytoplasmic side; sequence TIDSLLWLLY…SFDLAVKSVR (86 aa). Residues 39–95 are a coiled coil; sequence NQTSQTADEQRRLKREVMQLKREMNATSSQDEFAKWAKLRRRHDKTMEEYEAKNKAL. A helical transmembrane segment spans residues 111–131; it reads FFSTTGLKLFLQFWFSKTPIF. Topologically, residues 132-155 are lumenal; that stretch reads ELPRGWIPWQVEWVLSFPRAPLGT. The chain crosses the membrane as a helical span at residues 156-172; it reads VSIQIWGGVCATVVSLA. Residues 173-210 are Cytoplasmic-facing; the sequence is GDAIGVVNVYLTSKAPKQKEPATSGENSARPMAIKKEL. The segment at 189 to 210 is disordered; the sequence is KQKEPATSGENSARPMAIKKEL.

Belongs to the WRB/GET1 family. Interacts with GET3.

Its subcellular location is the endoplasmic reticulum membrane. Required for the post-translational delivery of tail-anchored (TA) proteins to the endoplasmic reticulum. Acts as a membrane receptor for soluble GET3, which recognizes and selectively binds the transmembrane domain of TA proteins in the cytosol. The chain is Protein GET1 from Coccidioides posadasii (strain C735) (Valley fever fungus).